The following is a 285-amino-acid chain: Ribosomal protein L11 methyltransferase (285 aa).

Thr131, Gly154, Asp176, and Asn223 together coordinate S-adenosyl-L-methionine.

Belongs to the methyltransferase superfamily. PrmA family.

It is found in the cytoplasm. The catalysed reaction is L-lysyl-[protein] + 3 S-adenosyl-L-methionine = N(6),N(6),N(6)-trimethyl-L-lysyl-[protein] + 3 S-adenosyl-L-homocysteine + 3 H(+). In terms of biological role, methylates ribosomal protein L11. This is Ribosomal protein L11 methyltransferase from Brucella melitensis biotype 2 (strain ATCC 23457).